A 218-amino-acid chain; its full sequence is Adenylate kinase (218 aa).

Residue 10-15 (GAGKGT) participates in ATP binding. The NMP stretch occupies residues 30–59 (STGDMLRAAVKAGTPLGQQAKAVMESGGLV). Residues Thr31, Arg36, 57–59 (GLV), 85–88 (GFPR), and Gln92 each bind AMP. The LID stretch occupies residues 122 to 159 (GRRSHPASGRTYHVKFNPPKVEGKDDITGEDLIQRKDD). ATP is bound by residues Arg123 and 132–133 (TY). AMP is bound by residues Arg156 and Arg167. Residue Gly203 participates in ATP binding.

This sequence belongs to the adenylate kinase family. In terms of assembly, monomer.

The protein resides in the cytoplasm. The enzyme catalyses AMP + ATP = 2 ADP. Its pathway is purine metabolism; AMP biosynthesis via salvage pathway; AMP from ADP: step 1/1. Catalyzes the reversible transfer of the terminal phosphate group between ATP and AMP. Plays an important role in cellular energy homeostasis and in adenine nucleotide metabolism. The polypeptide is Adenylate kinase (Variovorax paradoxus (strain S110)).